The chain runs to 125 residues: uncharacterized protein (125 aa).

The Cupin type-2 domain occupies 45–110 (IVPVGSKTLL…IGNVPLKILC (66 aa)).

This is an uncharacterized protein from Methanocaldococcus jannaschii (strain ATCC 43067 / DSM 2661 / JAL-1 / JCM 10045 / NBRC 100440) (Methanococcus jannaschii).